The sequence spans 217 residues: MITVALAKGALLRESVERFQAAGLDFSAVLDPDNRQLMVPSTCGRARALLVRNGDVPVYVAYGQAQLGIVGYDVLREHQMPVAHLVDLGFGGCRMSVAVKNTSGYTRATDLPPHCRVASKFTRCARQYFDSIDLPVELVHLTGSVELGPITGIAEAIVDLVATGRTLRDNGLVAIEDLFHTTARLVGHPLALRLDQGELQSIIDVMQRSPHDAVGVN.

This sequence belongs to the ATP phosphoribosyltransferase family. Short subfamily. In terms of assembly, heteromultimer composed of HisG and HisZ subunits.

It is found in the cytoplasm. It catalyses the reaction 1-(5-phospho-beta-D-ribosyl)-ATP + diphosphate = 5-phospho-alpha-D-ribose 1-diphosphate + ATP. Its pathway is amino-acid biosynthesis; L-histidine biosynthesis; L-histidine from 5-phospho-alpha-D-ribose 1-diphosphate: step 1/9. Functionally, catalyzes the condensation of ATP and 5-phosphoribose 1-diphosphate to form N'-(5'-phosphoribosyl)-ATP (PR-ATP). Has a crucial role in the pathway because the rate of histidine biosynthesis seems to be controlled primarily by regulation of HisG enzymatic activity. This Synechococcus sp. (strain WH7803) protein is ATP phosphoribosyltransferase.